The chain runs to 72 residues: Small ribosomal subunit protein bS18c (72 aa).

This sequence belongs to the bacterial ribosomal protein bS18 family. Part of the 30S ribosomal subunit.

The protein localises to the plastid. It localises to the chloroplast. The chain is Small ribosomal subunit protein bS18c from Phaeodactylum tricornutum (strain CCAP 1055/1).